The sequence spans 266 residues: MHVNGKVALVTGAAQGIGKAFTEALLLHGAKVALVDWNLETGVKCKAALDEQFEPQKTLFIQCDVADQKQLRDTFRKVVDHFGRLDILVNNAGVNNEKNWEQTLQINLVSVISGTYLGLDYMSKQNGGEGGIIINISSIAGLMPVAQQPVYCASKHGIIGFTRSAAMAANLMKSGVRLNVICPGFVKTPILESIEKEENMGQYIEYTDQIKAMMKFYGILDPSAIANGLINLIEDDALNGAIMKITASKGIHFQDYDLFPSFSKAP.

Residues 12–20 (GAAQGIGKA), 36–37 (DW), 63–65 (CDV), and Asn-91 each bind NAD(+). Substrate contacts are provided by Ser-138 and Gln-148. Tyr-151 (proton acceptor) is an active-site residue. Residues 151–155 (YCASK) and 186–188 (VKT) contribute to the NAD(+) site.

This sequence belongs to the short-chain dehydrogenases/reductases (SDR) family. Homodimer.

Its subcellular location is the cytoplasm. The catalysed reaction is prostaglandin E2 + NAD(+) = 15-oxoprostaglandin E2 + NADH + H(+). It carries out the reaction (15S)-hydroxy-(5Z,8Z,11Z,13E)-eicosatetraenoate + NAD(+) = 15-oxo-(5Z,8Z,11Z,13E)-eicosatetraenoate + NADH + H(+). It catalyses the reaction (11R)-hydroxy-(5Z,8Z,12E,14Z)-eicosatetraenoate + NAD(+) = 11-oxo-(5Z,8Z,12E,14Z)-eicosatetraenoate + NADH + H(+). The enzyme catalyses lipoxin A4 + NAD(+) = 15-oxo-(5S,6R)-dihydroxy-(7E,9E,11Z,13E)-eicosatetraenoate + NADH + H(+). The catalysed reaction is 15-oxo-(5S,6R)-dihydroxy-(7E,9E,11Z)-eicosatrienoate + NADH + H(+) = (5S,6R,15S)-trihydroxy-(7E,9E,11Z)-eicosatrienoate + NAD(+). It carries out the reaction prostaglandin A1 + NAD(+) = 15-oxo-prostaglandin A1 + NADH + H(+). It catalyses the reaction prostaglandin E1 + NAD(+) = 15-oxoprostaglandin E1 + NADH + H(+). The enzyme catalyses 14-hydroxy-(4Z,7Z,10Z,12E,16Z,19Z)-docosahexaenoate + NAD(+) = 14-oxo-(4Z,7Z,10Z,12E,16Z,19Z)-docosahexaenoate + NADH + H(+). The catalysed reaction is resolvin E1 + NAD(+) = 18-oxo-resolvin E1 + NADH + H(+). It carries out the reaction resolvin D1 + NAD(+) = 8-oxoresolvin D1 + NADH + H(+). It catalyses the reaction resolvin D1 + NAD(+) = 17-oxoresolvin D1 + NADH + H(+). The enzyme catalyses resolvin D2 + NAD(+) = 7-oxoresolvin D2 + NADH + H(+). The catalysed reaction is resolvin D2 + NAD(+) = 16-oxoresolvin D2 + NADH + H(+). In terms of biological role, catalyzes the NAD-dependent dehydrogenation (oxidation) of a broad array of hydroxylated polyunsaturated fatty acids (mainly eicosanoids and docosanoids, including prostaglandins, lipoxins and resolvins), yielding their corresponding keto (oxo) metabolites. Decreases the levels of the pro-proliferative prostaglandins such as prostaglandin E2 (whose activity is increased in cancer because of an increase in the expression of cyclooxygenase 2) and generates oxo-fatty acid products that can profoundly influence cell function by abrogating pro-inflammatory cytokine expression. Converts resolvins E1, D1 and D2 to their oxo products, which represents a mode of resolvin inactivation. Resolvin E1 plays important roles during the resolution phase of acute inflammation, while resolvins D1 and D2 have a unique role in obesity-induced adipose inflammation. This is 15-hydroxyprostaglandin dehydrogenase [NAD(+)] (Hpgd) from Rattus norvegicus (Rat).